The following is a 354-amino-acid chain: Holliday junction branch migration complex subunit RuvB (354 aa).

A large ATPase domain (RuvB-L) region spans residues 1 to 183; that stretch reads MTGDNLVSAY…FGFVAHLDFY (183 aa). ATP contacts are provided by residues Arg23, Gly64, Lys67, Thr68, Ser69, 130–132, Arg173, Tyr183, and Arg220; that span reads EDF. Thr68 is a binding site for Mg(2+). Positions 184 to 254 are small ATPAse domain (RuvB-S); sequence SPADLETLLH…AARAALLVYD (71 aa). Positions 257 to 354 are head domain (RuvB-H); that stretch reads ALGLDRLDRQ…DLFSVEPDQP (98 aa). 2 residues coordinate DNA: Arg312 and Arg317. Positions 330-354 are disordered; sequence TPPNGIFGSDAPPASDLFSVEPDQP.

Belongs to the RuvB family. Homohexamer. Forms an RuvA(8)-RuvB(12)-Holliday junction (HJ) complex. HJ DNA is sandwiched between 2 RuvA tetramers; dsDNA enters through RuvA and exits via RuvB. An RuvB hexamer assembles on each DNA strand where it exits the tetramer. Each RuvB hexamer is contacted by two RuvA subunits (via domain III) on 2 adjacent RuvB subunits; this complex drives branch migration. In the full resolvosome a probable DNA-RuvA(4)-RuvB(12)-RuvC(2) complex forms which resolves the HJ.

The protein localises to the cytoplasm. It catalyses the reaction ATP + H2O = ADP + phosphate + H(+). Functionally, the RuvA-RuvB-RuvC complex processes Holliday junction (HJ) DNA during genetic recombination and DNA repair, while the RuvA-RuvB complex plays an important role in the rescue of blocked DNA replication forks via replication fork reversal (RFR). RuvA specifically binds to HJ cruciform DNA, conferring on it an open structure. The RuvB hexamer acts as an ATP-dependent pump, pulling dsDNA into and through the RuvAB complex. RuvB forms 2 homohexamers on either side of HJ DNA bound by 1 or 2 RuvA tetramers; 4 subunits per hexamer contact DNA at a time. Coordinated motions by a converter formed by DNA-disengaged RuvB subunits stimulates ATP hydrolysis and nucleotide exchange. Immobilization of the converter enables RuvB to convert the ATP-contained energy into a lever motion, pulling 2 nucleotides of DNA out of the RuvA tetramer per ATP hydrolyzed, thus driving DNA branch migration. The RuvB motors rotate together with the DNA substrate, which together with the progressing nucleotide cycle form the mechanistic basis for DNA recombination by continuous HJ branch migration. Branch migration allows RuvC to scan DNA until it finds its consensus sequence, where it cleaves and resolves cruciform DNA. In Salinispora arenicola (strain CNS-205), this protein is Holliday junction branch migration complex subunit RuvB.